Consider the following 489-residue polypeptide: Serine/threonine-protein kinase dyf-5 (489 aa).

The region spanning 11–291 is the Protein kinase domain; the sequence is YLMTKRLGDG…ANQSLRYKYF (281 aa). ATP-binding positions include 17–25 and K40; that span reads LGDGTFGEV. Residue D132 is the Proton acceptor of the active site. 2 disordered regions span residues 366–385 and 452–489; these read EKSD…KPTA and QTGP…KYVK. Residues 458–473 show a composition bias toward low complexity; that stretch reads SNQTNNHSANNSHSPN.

The protein belongs to the protein kinase superfamily. CMGC Ser/Thr protein kinase family. RCK subfamily. Requires Mg(2+) as cofactor. As to expression, expressed in head neurons including amphid and labial sensory neurons and 3 pairs of neurons in the tail including phasmid sensory neurons. In male, expressed in the tail including the sensory rays and the spicule.

Its subcellular location is the perikaryon. It localises to the cell projection. The protein resides in the dendrite. It is found in the axon. The protein localises to the cilium. The enzyme catalyses L-seryl-[protein] + ATP = O-phospho-L-seryl-[protein] + ADP + H(+). The catalysed reaction is L-threonyl-[protein] + ATP = O-phospho-L-threonyl-[protein] + ADP + H(+). Serine/threonine-protein kinase which is required for ciliogenesis. Regulates the length and the morphology of sensory neuron cilia. In addition, plays a role in the anterograde intraflagellar transport (IFT) in the cilia by regulating the undocking of kinesin-II motor complex (composed of klp-11, klp-20 and kap-1) before reaching the distal segment and the docking of kinesin motor osm-3 onto IFT cargos. The chain is Serine/threonine-protein kinase dyf-5 from Caenorhabditis elegans.